We begin with the raw amino-acid sequence, 520 residues long: uncharacterized protein (520 aa).

9 helical membrane-spanning segments follow: residues 38-58, 84-104, 105-125, 138-158, 167-187, 220-240, 271-291, 318-338, and 355-375; these read VVLIILSFLISFLLIISIPGG, IAIYILAGLAFSFCMSVGIFN, IGISGQMMAGAIFGFLMILKV, IITVLLMVIGSVSVAVVVATL, VVSAIMLNWIVVLISAYLVET, FGWLASLIIAFISVIIVAVVL, FLSFIISGILSGLLATVVYTA, IAIGLIALNNPFRIVIVSVLI, and ASLVLGIMMYFAALYNLMVYF.

Its subcellular location is the cell membrane. This is an uncharacterized protein from Mycoplasma genitalium (strain ATCC 33530 / DSM 19775 / NCTC 10195 / G37) (Mycoplasmoides genitalium).